The following is a 488-amino-acid chain: Ribulose bisphosphate carboxylase large chain (488 aa).

Residues asparagine 127 and threonine 177 each coordinate substrate. Lysine 179 functions as the Proton acceptor in the catalytic mechanism. Lysine 181 serves as a coordination point for substrate. Mg(2+)-binding residues include lysine 205, aspartate 207, and glutamate 208. The residue at position 205 (lysine 205) is an N6-carboxylysine. Histidine 297 functions as the Proton acceptor in the catalytic mechanism. Substrate-binding residues include arginine 298, histidine 330, and serine 382.

This sequence belongs to the RuBisCO large chain family. Type I subfamily. As to quaternary structure, heterohexadecamer of 8 large chains and 8 small chains. Mg(2+) serves as cofactor.

It localises to the plastid. It is found in the chloroplast. The enzyme catalyses 2 (2R)-3-phosphoglycerate + 2 H(+) = D-ribulose 1,5-bisphosphate + CO2 + H2O. The catalysed reaction is D-ribulose 1,5-bisphosphate + O2 = 2-phosphoglycolate + (2R)-3-phosphoglycerate + 2 H(+). Functionally, ruBisCO catalyzes two reactions: the carboxylation of D-ribulose 1,5-bisphosphate, the primary event in carbon dioxide fixation, as well as the oxidative fragmentation of the pentose substrate in the photorespiration process. Both reactions occur simultaneously and in competition at the same active site. This is Ribulose bisphosphate carboxylase large chain from Porphyridium aerugineum (Red microalga).